The chain runs to 154 residues: Putative F-box protein At2g11200 (154 aa).

The F-box domain occupies 5 to 51 (TTAMSDLPRDLEEEVLSRVQLASLRAVRTTCKKWNRRLSKYRFTKKY).

The chain is Putative F-box protein At2g11200 from Arabidopsis thaliana (Mouse-ear cress).